Reading from the N-terminus, the 179-residue chain is O-acetyl-ADP-ribose deacetylase (179 aa).

One can recognise a Macro domain in the interval 1 to 175 (MTSRLQVIQG…LYARLLTQQG (175 aa)). Residues 11-12 (DI), Asn-25, 33-35 (GVD), and 122-126 (STGVY) each bind substrate. The active-site Proton acceptor is Asp-35.

The protein belongs to the MacroD-type family. YmdB subfamily. In terms of assembly, homodimer. Interacts with RNase III.

The catalysed reaction is 3''-O-acetyl-ADP-D-ribose + H2O = ADP-D-ribose + acetate + H(+). It carries out the reaction 2''-O-acetyl-ADP-D-ribose + H2O = ADP-D-ribose + acetate + H(+). Functionally, deacetylates O-acetyl-ADP ribose to yield ADP-ribose and free acetate. Down-regulates ribonuclease 3 (RNase III) activity. Acts by interacting directly with the region of the ribonuclease that is required for dimerization/activation. In Salmonella newport (strain SL254), this protein is O-acetyl-ADP-ribose deacetylase.